Consider the following 292-residue polypeptide: Elongation factor Ts (292 aa).

Residues 82-85 (TDFV) are involved in Mg(2+) ion dislocation from EF-Tu.

It belongs to the EF-Ts family.

It is found in the cytoplasm. Functionally, associates with the EF-Tu.GDP complex and induces the exchange of GDP to GTP. It remains bound to the aminoacyl-tRNA.EF-Tu.GTP complex up to the GTP hydrolysis stage on the ribosome. The chain is Elongation factor Ts from Legionella pneumophila (strain Paris).